A 357-amino-acid polypeptide reads, in one-letter code: GDP-polyphosphate phosphotransferase (357 aa).

The tract at residues 1-83 is disordered; it reads MSEEPTVSPP…DSTSASLPAN (83 aa). The segment covering 14-25 has biased composition (low complexity); that stretch reads QPAAQPAKPARP. Residues 26 to 40 are compositionally biased toward basic residues; that stretch reads AARRAPRKPATRRPR.

Belongs to the polyphosphate kinase 2 (PPK2) family. Class I subfamily. Homotetramer. Also forms octamers. It depends on Mg(2+) as a cofactor. Requires Mn(2+) as cofactor.

It catalyses the reaction [phosphate](n) + GTP = [phosphate](n+1) + GDP. The enzyme catalyses [phosphate](n) + ATP = [phosphate](n+1) + ADP. Functionally, uses inorganic polyphosphate (polyP) as a donor to convert GDP to GTP and ADP to ATP. Shows a preference for GDP. Can also catalyze the synthesis of polyP from GTP or ATP, but the rate of polyP utilization is 75-fold greater than the rate of polyP synthesis. The polypeptide is GDP-polyphosphate phosphotransferase (Pseudomonas aeruginosa (strain ATCC 15692 / DSM 22644 / CIP 104116 / JCM 14847 / LMG 12228 / 1C / PRS 101 / PAO1)).